We begin with the raw amino-acid sequence, 263 residues long: MTMTATSIDVRVQSPKIDVRDLNFYYGKFHALKNISLQIPEKQVTAFIGPSGCGKSTLLRTFNKMYALYPEQRAEGEINMDGENLLTSRMDIALLRAKVGMVFQKPTPFPMSIYDNIAFGVKLFERLSRSEMDDRVEWALTKAALWGEVKDKLHQSGYGLSGGQQQRLCIARGIAIRPEVLLLDEPCSALDPISTGKIEELIAELKDDYTVVIVTHNMQQAARCSDYTAYMYLGELIEFGETEKIFIKPRRKETEDYITGRFG.

The region spanning 17 to 258 is the ABC transporter domain; the sequence is IDVRDLNFYY…PRRKETEDYI (242 aa). Residue 49–56 participates in ATP binding; that stretch reads GPSGCGKS.

Belongs to the ABC transporter superfamily. Phosphate importer (TC 3.A.1.7) family. The complex is composed of two ATP-binding proteins (PstB), two transmembrane proteins (PstC and PstA) and a solute-binding protein (PstS).

The protein resides in the cell inner membrane. The catalysed reaction is phosphate(out) + ATP + H2O = ADP + 2 phosphate(in) + H(+). In terms of biological role, part of the ABC transporter complex PstSACB involved in phosphate import. Responsible for energy coupling to the transport system. The polypeptide is Phosphate import ATP-binding protein PstB (Ralstonia nicotianae (strain ATCC BAA-1114 / GMI1000) (Ralstonia solanacearum)).